The chain runs to 169 residues: Lipoprotein signal peptidase (169 aa).

4 helical membrane-spanning segments follow: residues 4 to 24 (PICSTGLRWLWLAVVVVILDI), 29 to 49 (WVMAHFALYESVPLIPFFNLT), 70 to 90 (WFFAGIAIGISVVLMVMMYRS), and 101 to 121 (YALIIGGALGNLYDRLVHGAV). Residues D123 and D141 contribute to the active site. The chain crosses the membrane as a helical span at residues 137–157 (FNLADVAICIGAALVIFEGFL).

It belongs to the peptidase A8 family.

Its subcellular location is the cell inner membrane. The catalysed reaction is Release of signal peptides from bacterial membrane prolipoproteins. Hydrolyzes -Xaa-Yaa-Zaa-|-(S,diacylglyceryl)Cys-, in which Xaa is hydrophobic (preferably Leu), and Yaa (Ala or Ser) and Zaa (Gly or Ala) have small, neutral side chains.. The protein operates within protein modification; lipoprotein biosynthesis (signal peptide cleavage). In terms of biological role, this protein specifically catalyzes the removal of signal peptides from prolipoproteins. The chain is Lipoprotein signal peptidase from Yersinia pestis bv. Antiqua (strain Antiqua).